Here is a 47-residue protein sequence, read N- to C-terminus: Large ribosomal subunit protein bL33 (47 aa).

The protein belongs to the bacterial ribosomal protein bL33 family.

The polypeptide is Large ribosomal subunit protein bL33 (Staphylococcus xylosus).